Consider the following 745-residue polypeptide: Junction plakoglobin (745 aa).

M1 carries the N-acetylmethionine modification. T14 is a glycosylation site (O-linked (GlcNAc) threonine). S99 and S125 each carry phosphoserine. ARM repeat units follow at residues 132 to 171, 172 to 215, 216 to 255, 258 to 297, 298 to 341, 342 to 381, 383 to 420, 423 to 464, 470 to 510, 512 to 551, 574 to 613, and 615 to 661; these read NYQD…QLSK, KEAS…LSHH, REGL…NLLL, EGAK…LLAY, GNQE…LSVC, PSNK…NLSD, ATKQ…NLTC, SKNK…HLTS, EMAQ…NLAL, PANH…QPYT, PMNR…ELAQ, and KEAA…PDYR. Residues 132–297 are interaction with DSC1 and DSG1; sequence NYQDDAELAT…TTDCLQLLAY (166 aa). Position 182 is a phosphoserine (S182). Positions 574–661 are interaction with DSC1; it reads PMNRMEIFRL…ISEDKNPDYR (88 aa). Phosphoserine is present on residues S665 and S730.

The protein belongs to the beta-catenin family. In terms of assembly, homodimer. Component of an E-cadherin/catenin adhesion complex composed of at least E-cadherin/CDH1 and gamma-catenin/JUP, and possibly alpha-catenin/CTNNA1; the complex is located to adherens junctions. The stable association of CTNNA1 is controversial as CTNNA1 was shown not to bind to F-actin when assembled in the complex. Interacts with MUC1. Interacts with CAV1. Interacts with PTPRJ. Interacts with DSG1. Interacts with DSC1 and DSC2. Interacts with PKP2. Interacts with PKP3 (via N-terminus); the interaction is required for PKP3 localization to desmosome cell-cell junctions. Interacts with DSG4. In terms of processing, may be phosphorylated by FER. In terms of tissue distribution, expressed in the heart (at protein level).

It localises to the cell junction. It is found in the adherens junction. The protein localises to the desmosome. The protein resides in the cytoplasm. Its subcellular location is the cytoskeleton. It localises to the cell membrane. It is found in the nucleus. Functionally, common junctional plaque protein. The membrane-associated plaques are architectural elements in an important strategic position to influence the arrangement and function of both the cytoskeleton and the cells within the tissue. The presence of plakoglobin in both the desmosomes and in the intermediate junctions suggests that it plays a central role in the structure and function of submembranous plaques. Acts as a substrate for VE-PTP and is required by it to stimulate VE-cadherin function in endothelial cells. Can replace beta-catenin in E-cadherin/catenin adhesion complexes which are proposed to couple cadherins to the actin cytoskeleton. This is Junction plakoglobin from Rattus norvegicus (Rat).